The following is a 923-amino-acid chain: Alanine--tRNA ligase (923 aa).

The Zn(2+) site is built by His611, His615, Cys714, and His718. Gly residues predominate over residues Val886–Asp903. The interval Val886–Asn909 is disordered.

This sequence belongs to the class-II aminoacyl-tRNA synthetase family. Requires Zn(2+) as cofactor.

It localises to the cytoplasm. The enzyme catalyses tRNA(Ala) + L-alanine + ATP = L-alanyl-tRNA(Ala) + AMP + diphosphate. In terms of biological role, catalyzes the attachment of alanine to tRNA(Ala) in a two-step reaction: alanine is first activated by ATP to form Ala-AMP and then transferred to the acceptor end of tRNA(Ala). Also edits incorrectly charged Ser-tRNA(Ala) and Gly-tRNA(Ala) via its editing domain. The sequence is that of Alanine--tRNA ligase from Methanococcoides burtonii (strain DSM 6242 / NBRC 107633 / OCM 468 / ACE-M).